We begin with the raw amino-acid sequence, 379 residues long: ATP phosphoribosyltransferase regulatory subunit (379 aa).

Belongs to the class-II aminoacyl-tRNA synthetase family. HisZ subfamily. As to quaternary structure, heteromultimer composed of HisG and HisZ subunits.

The protein localises to the cytoplasm. It participates in amino-acid biosynthesis; L-histidine biosynthesis; L-histidine from 5-phospho-alpha-D-ribose 1-diphosphate: step 1/9. Functionally, required for the first step of histidine biosynthesis. May allow the feedback regulation of ATP phosphoribosyltransferase activity by histidine. The sequence is that of ATP phosphoribosyltransferase regulatory subunit from Gluconobacter oxydans (strain 621H) (Gluconobacter suboxydans).